Consider the following 223-residue polypeptide: Neurotrophic factor BDNF precursor form (223 aa).

The signal sequence occupies residues serine 1–alanine 5. A propeptide spanning residues alanine 6 to arginine 114 is cleaved from the precursor. Asparagine 107 carries an N-linked (GlcNAc...) asparagine glycan. 2 disulfide bridges follow: cysteine 127–cysteine 194 and cysteine 172–cysteine 223.

It belongs to the NGF-beta family.

It is found in the secreted. Promotes the survival of neuronal populations that are all located either in the central nervous system or directly connected to it. The sequence is that of Neurotrophic factor BDNF precursor form (BDNF) from Chilabothrus striatus (Haitian boa constrictor).